Consider the following 489-residue polypeptide: N-succinylglutamate 5-semialdehyde dehydrogenase (489 aa).

223–228 (GSSNTG) is a binding site for NAD(+). Residues glutamate 246 and cysteine 280 contribute to the active site.

The protein belongs to the aldehyde dehydrogenase family. AstD subfamily.

The catalysed reaction is N-succinyl-L-glutamate 5-semialdehyde + NAD(+) + H2O = N-succinyl-L-glutamate + NADH + 2 H(+). It participates in amino-acid degradation; L-arginine degradation via AST pathway; L-glutamate and succinate from L-arginine: step 4/5. Catalyzes the NAD-dependent reduction of succinylglutamate semialdehyde into succinylglutamate. The polypeptide is N-succinylglutamate 5-semialdehyde dehydrogenase (Idiomarina loihiensis (strain ATCC BAA-735 / DSM 15497 / L2-TR)).